Consider the following 448-residue polypeptide: Squalene synthase ERG9 (448 aa).

The chain crosses the membrane as a helical span at residues 428–448; sequence CNVVLFGIGALILSLIYFVLY.

Belongs to the phytoene/squalene synthase family. The cofactor is Mg(2+).

The protein localises to the endoplasmic reticulum membrane. Its subcellular location is the microsome. The catalysed reaction is 2 (2E,6E)-farnesyl diphosphate + NADPH + H(+) = squalene + 2 diphosphate + NADP(+). The enzyme catalyses 2 (2E,6E)-farnesyl diphosphate + NADH + H(+) = squalene + 2 diphosphate + NAD(+). The protein operates within terpene metabolism; lanosterol biosynthesis; lanosterol from farnesyl diphosphate: step 1/3. Squalene synthase; part of the third module of ergosterol biosynthesis pathway that includes the late steps of the pathway. ERG9 produces squalene from 2 farnesyl pyrophosphate moieties. The third module or late pathway involves the ergosterol synthesis itself through consecutive reactions that mainly occur in the endoplasmic reticulum (ER) membrane. Firstly, the squalene synthase ERG9 catalyzes the condensation of 2 farnesyl pyrophosphate moieties to form squalene, which is the precursor of all steroids. Squalene synthase is crucial for balancing the incorporation of farnesyl diphosphate (FPP) into sterol and nonsterol isoprene synthesis. Secondly, the squalene epoxidase ERG1 catalyzes the stereospecific oxidation of squalene to (S)-2,3-epoxysqualene, which is considered to be a rate-limiting enzyme in steroid biosynthesis. Then, the lanosterol synthase ERG7 catalyzes the cyclization of (S)-2,3 oxidosqualene to lanosterol, a reaction that forms the sterol core. In the next steps, lanosterol is transformed to zymosterol through a complex process involving various demethylation, reduction and desaturation reactions. The lanosterol 14-alpha-demethylase ERG11 (also known as CYP51) catalyzes C14-demethylation of lanosterol to produce 4,4'-dimethyl cholesta-8,14,24-triene-3-beta-ol, which is critical for ergosterol biosynthesis. The C-14 reductase ERG24 reduces the C14=C15 double bond of 4,4-dimethyl-cholesta-8,14,24-trienol to produce 4,4-dimethyl-cholesta-8,24-dienol. 4,4-dimethyl-cholesta-8,24-dienol is substrate of the C-4 demethylation complex ERG25-ERG26-ERG27 in which ERG25 catalyzes the three-step monooxygenation required for the demethylation of 4,4-dimethyl and 4alpha-methylsterols, ERG26 catalyzes the oxidative decarboxylation that results in a reduction of the 3-beta-hydroxy group at the C-3 carbon to an oxo group, and ERG27 is responsible for the reduction of the keto group on the C-3. ERG28 has a role as a scaffold to help anchor ERG25, ERG26 and ERG27 to the endoplasmic reticulum and ERG29 regulates the activity of the iron-containing C4-methylsterol oxidase ERG25. Then, the sterol 24-C-methyltransferase ERG6 catalyzes the methyl transfer from S-adenosyl-methionine to the C-24 of zymosterol to form fecosterol. The C-8 sterol isomerase ERG2 catalyzes the reaction which results in unsaturation at C-7 in the B ring of sterols and thus converts fecosterol to episterol. The sterol-C5-desaturase ERG3 then catalyzes the introduction of a C-5 double bond in the B ring to produce 5-dehydroepisterol. The C-22 sterol desaturase ERG5 further converts 5-dehydroepisterol into ergosta-5,7,22,24(28)-tetraen-3beta-ol by forming the C-22(23) double bond in the sterol side chain. Finally, ergosta-5,7,22,24(28)-tetraen-3beta-ol is substrate of the C-24(28) sterol reductase ERG4 to produce ergosterol. This Candida albicans (strain SC5314 / ATCC MYA-2876) (Yeast) protein is Squalene synthase ERG9.